Consider the following 304-residue polypeptide: Tyrosine recombinase XerC (304 aa).

Positions 2–88 constitute a Core-binding (CB) domain; the sequence is ENVKNFVKLF…ALRSFYKFLM (87 aa). The Tyr recombinase domain occupies 109–294; the sequence is RIPKFLYQKE…SKEMLRNTYM (186 aa). Catalysis depends on residues R149, K173, H246, R249, and H272. Catalysis depends on Y281, which acts as the O-(3'-phospho-DNA)-tyrosine intermediate.

The protein belongs to the 'phage' integrase family. XerC subfamily. As to quaternary structure, forms a cyclic heterotetrameric complex composed of two molecules of XerC and two molecules of XerD.

It is found in the cytoplasm. Functionally, site-specific tyrosine recombinase, which acts by catalyzing the cutting and rejoining of the recombining DNA molecules. The XerC-XerD complex is essential to convert dimers of the bacterial chromosome into monomers to permit their segregation at cell division. It also contributes to the segregational stability of plasmids. The polypeptide is Tyrosine recombinase XerC (Bacillus subtilis (strain 168)).